A 1072-amino-acid polypeptide reads, in one-letter code: Carbamoyl phosphate synthase large chain (1072 aa).

Residues 1-401 (MPKRLDINTI…SLLKAVRSLE (401 aa)) form a carboxyphosphate synthetic domain region. Residues Arg129, Arg169, Gly175, Gly176, Lys208, Ile210, Glu215, Gly241, Val242, His243, Gln284, and Glu298 each contribute to the ATP site. Positions 133-327 (RTLMQELNEP…IAKLAAKIAV (195 aa)) constitute an ATP-grasp 1 domain. Residues Gln284, Glu298, and Asn300 each coordinate Mg(2+). Positions 284, 298, and 300 each coordinate Mn(2+). The interval 402 to 546 (LGIYHLELDH…YSTYADENES (145 aa)) is oligomerization domain. The segment at 547 to 929 (IVTDRKSVVV…ALYKGLVASG (383 aa)) is carbamoyl phosphate synthetic domain. Residues 671–861 (EAALTKLGIP…MANVATKVIL (191 aa)) enclose the ATP-grasp 2 domain. ATP is bound by residues Arg707, Arg746, Glu752, Gly777, Val778, His779, Ser780, Gln820, and Glu832. 3 residues coordinate Mg(2+): Gln820, Glu832, and Asn834. Residues Gln820, Glu832, and Asn834 each coordinate Mn(2+). The region spanning 930–1072 (INIPTHGSVI…QTKRHEVVHA (143 aa)) is the MGS-like domain. The tract at residues 930-1072 (INIPTHGSVI…QTKRHEVVHA (143 aa)) is allosteric domain.

This sequence belongs to the CarB family. Composed of two chains; the small (or glutamine) chain promotes the hydrolysis of glutamine to ammonia, which is used by the large (or ammonia) chain to synthesize carbamoyl phosphate. Tetramer of heterodimers (alpha,beta)4. Mg(2+) serves as cofactor. Requires Mn(2+) as cofactor.

The enzyme catalyses hydrogencarbonate + L-glutamine + 2 ATP + H2O = carbamoyl phosphate + L-glutamate + 2 ADP + phosphate + 2 H(+). The catalysed reaction is hydrogencarbonate + NH4(+) + 2 ATP = carbamoyl phosphate + 2 ADP + phosphate + 2 H(+). Its pathway is amino-acid biosynthesis; L-arginine biosynthesis; carbamoyl phosphate from bicarbonate: step 1/1. The protein operates within pyrimidine metabolism; UMP biosynthesis via de novo pathway; (S)-dihydroorotate from bicarbonate: step 1/3. Large subunit of the glutamine-dependent carbamoyl phosphate synthetase (CPSase). CPSase catalyzes the formation of carbamoyl phosphate from the ammonia moiety of glutamine, carbonate, and phosphate donated by ATP, constituting the first step of 2 biosynthetic pathways, one leading to arginine and/or urea and the other to pyrimidine nucleotides. The large subunit (synthetase) binds the substrates ammonia (free or transferred from glutamine from the small subunit), hydrogencarbonate and ATP and carries out an ATP-coupled ligase reaction, activating hydrogencarbonate by forming carboxy phosphate which reacts with ammonia to form carbamoyl phosphate. The chain is Carbamoyl phosphate synthase large chain from Bacillus cereus (strain AH820).